A 379-amino-acid polypeptide reads, in one-letter code: Cytochrome b (379 aa).

The next 4 helical transmembrane spans lie at 33-53 (FGSLLGICLILQILTGLFLAM), 77-98 (WMIRYMHANGASLFFICLFMHV), 113-133 (WNIGILLLLTVMATAFMGYVL), and 178-198 (FFAFHFILPFIISALAAVHLL). H83 and H97 together coordinate heme b. Residues H182 and H196 each contribute to the heme b site. H201 contributes to the a ubiquinone binding site. Transmembrane regions (helical) follow at residues 226 to 246 (IKDILGLLFLILALMLLVLFS), 288 to 308 (LGGVLPHAMSILILPIIPMLH), 320 to 340 (LSQCMFWLLVADLPILTWIGG), and 347 to 367 (FITIGQLASVYISSILLXLMP).

Belongs to the cytochrome b family. As to quaternary structure, the cytochrome bc1 complex contains 11 subunits: 3 respiratory subunits (MT-CYB, CYC1 and UQCRFS1), 2 core proteins (UQCRC1 and UQCRC2) and 6 low-molecular weight proteins (UQCRH/QCR6, UQCRB/QCR7, UQCRQ/QCR8, UQCR10/QCR9, UQCR11/QCR10 and a cleavage product of UQCRFS1). This cytochrome bc1 complex then forms a dimer. It depends on heme b as a cofactor.

The protein localises to the mitochondrion inner membrane. Functionally, component of the ubiquinol-cytochrome c reductase complex (complex III or cytochrome b-c1 complex) that is part of the mitochondrial respiratory chain. The b-c1 complex mediates electron transfer from ubiquinol to cytochrome c. Contributes to the generation of a proton gradient across the mitochondrial membrane that is then used for ATP synthesis. The sequence is that of Cytochrome b (MT-CYB) from Chrotogale owstoni (Owston's palm civet).